The following is a 184-amino-acid chain: Lipoprotein signal peptidase (184 aa).

Transmembrane regions (helical) follow at residues 23 to 43 (FLYYKLALILFVGFVILFQVF), 88 to 108 (PGLVYFLQGFLSFIALFFLVF), and 110 to 130 (TSYNYIFWITTLAFGSLGNFF). Residues Asp-142 and Asp-157 contribute to the active site. Residues 156 to 176 (ADCCITFSFIGLFLSFLIQFF) form a helical membrane-spanning segment.

Belongs to the peptidase A8 family.

It localises to the cell membrane. The enzyme catalyses Release of signal peptides from bacterial membrane prolipoproteins. Hydrolyzes -Xaa-Yaa-Zaa-|-(S,diacylglyceryl)Cys-, in which Xaa is hydrophobic (preferably Leu), and Yaa (Ala or Ser) and Zaa (Gly or Ala) have small, neutral side chains.. The protein operates within protein modification; lipoprotein biosynthesis (signal peptide cleavage). In terms of biological role, this protein specifically catalyzes the removal of signal peptides from prolipoproteins. This is Lipoprotein signal peptidase from Mycoplasma pneumoniae (strain ATCC 29342 / M129 / Subtype 1) (Mycoplasmoides pneumoniae).